A 396-amino-acid chain; its full sequence is Elongation factor Tu (396 aa).

The tr-type G domain occupies 10–205 (KPHVNIGTIG…AVDESIPDPV (196 aa)). Residues 19-26 (GHVDHGKT) form a G1 region. GTP is bound at residue 19–26 (GHVDHGKT). Thr-26 is a Mg(2+) binding site. A G2 region spans residues 62-66 (GITIN). The G3 stretch occupies residues 83 to 86 (DAPG). GTP contacts are provided by residues 83–87 (DAPGH) and 138–141 (NKAD). The G4 stretch occupies residues 138–141 (NKAD). Positions 175–177 (SAL) are G5.

This sequence belongs to the TRAFAC class translation factor GTPase superfamily. Classic translation factor GTPase family. EF-Tu/EF-1A subfamily. As to quaternary structure, monomer.

The protein resides in the cytoplasm. It catalyses the reaction GTP + H2O = GDP + phosphate + H(+). GTP hydrolase that promotes the GTP-dependent binding of aminoacyl-tRNA to the A-site of ribosomes during protein biosynthesis. This is Elongation factor Tu from Mycolicibacterium gilvum (strain PYR-GCK) (Mycobacterium gilvum (strain PYR-GCK)).